The chain runs to 187 residues: UPF0301 protein Ppha_2142 (187 aa).

Belongs to the UPF0301 (AlgH) family.

The protein is UPF0301 protein Ppha_2142 of Pelodictyon phaeoclathratiforme (strain DSM 5477 / BU-1).